Consider the following 199-residue polypeptide: Recombination protein RecR (199 aa).

Residues 56-71 (CQQCNNYTEQTLCALC) form a C4-type zinc finger. In terms of domain architecture, Toprim spans 79–174 (TLLCVVESPA…NISQLAHGIP (96 aa)).

Belongs to the RecR family.

May play a role in DNA repair. It seems to be involved in an RecBC-independent recombinational process of DNA repair. It may act with RecF and RecO. This chain is Recombination protein RecR, found in Legionella pneumophila subsp. pneumophila (strain Philadelphia 1 / ATCC 33152 / DSM 7513).